The sequence spans 445 residues: POU domain, class 3, transcription factor 2 (445 aa).

4 disordered regions span residues 63 to 173 (TALS…WRSA), 203 to 269 (LGAG…TPTS), 336 to 361 (EADS…KKRT), and 411 to 445 (EKRM…TPVQ). The segment covering 68–90 (GGSGGGGGGGGGGGGGGGGGGDG) has biased composition (gly residues). Over residues 125-151 (QQQHQQQQQQQQQQQQQQQQQQQQQQQ) the composition is skewed to low complexity. The segment covering 217–226 (LRDAHDEPHH) has biased composition (basic and acidic residues). Positions 227–237 (ADHHPHPHSHP) are enriched in basic residues. Residues 239–253 (QQPPPPPPPQGPPGH) are compositionally biased toward pro residues. Residues 264–338 (EDTPTSDDLE…LLNKWLEEAD (75 aa)) enclose the POU-specific domain. Ser-343 carries the phosphoserine modification. Residues 356-415 (KRKKRTSIEVSVKGALESHFLKCPKPSAQEITSLADSLQLEKEVVRVWFCNRRQKEKRMT) constitute a DNA-binding region (homeobox).

Belongs to the POU transcription factor family. Class-3 subfamily. In terms of assembly, interacts with PQBP1. Interaction with ISL1. In terms of tissue distribution, expressed specifically at high levels in the brain.

The protein localises to the nucleus. In terms of biological role, transcription factor that plays a key role in neuronal differentiation. Binds preferentially to the recognition sequence which consists of two distinct half-sites, ('GCAT') and ('TAAT'), separated by a non-conserved spacer region of 0, 2, or 3 nucleotides. Acts as a transcriptional activator when binding cooperatively with SOX4, SOX11, or SOX12 to gene promoters. The combination of three transcription factors, ASCL1, POU3F2/BRN2 and MYT1L, is sufficient to reprogram fibroblasts and other somatic cells into induced neuronal (iN) cells in vitro. Acts downstream of ASCL1, accessing chromatin that has been opened by ASCL1, and promotes transcription of neuronal genes. In Rattus norvegicus (Rat), this protein is POU domain, class 3, transcription factor 2 (Pou3f2).